Reading from the N-terminus, the 285-residue chain is Sulfoquinovosyl glycerol transport system permease protein SmoH (285 aa).

Transmembrane regions (helical) follow at residues 21-41 (FIAASILLVNGLFPAIWILFT), 83-103 (FMVALLSTALTILISVLAAYA), 115-135 (ILSLIIAVSTFPLVTLLVPLF), 150-170 (LILPYTVLSLPVCTLMLVSFF), 195-215 (VVVPLCAPGVFTAGILAFVNA), and 250-270 (PVISAALVVGIVPVAILIVIF). Positions 79 to 270 (LFNSFMVALL…VPVAILIVIF (192 aa)) constitute an ABC transmembrane type-1 domain.

It belongs to the binding-protein-dependent transport system permease family. The complex is probably composed of two ATP-binding proteins (SmoE), two transmembrane proteins (SmoG and SmoH) and a solute-binding protein (SmoF).

The protein resides in the cell inner membrane. Its function is as follows. Part of the ABC transporter complex SmoEFGH involved in sulfoquinovosyl glycerol (SQGro) uptake. Responsible for the translocation of the substrate across the membrane. This is Sulfoquinovosyl glycerol transport system permease protein SmoH from Agrobacterium fabrum (strain C58 / ATCC 33970) (Agrobacterium tumefaciens (strain C58)).